Reading from the N-terminus, the 689-residue chain is Potassium-transporting ATPase ATP-binding subunit (689 aa).

The next 4 membrane-spanning stretches (helical) occupy residues 35–55, 62–82, 220–240, and 260–280; these read VMFV…AILA, AAFT…ANFA, ALTI…ATLF, and VLVA…LSAI. The 4-aspartylphosphate intermediate role is filled by Asp-313. Residues Asp-350, Glu-354, 383–390, and Lys-401 contribute to the ATP site; that span reads FSAQTRMS. 2 residues coordinate Mg(2+): Asp-524 and Asp-528. The next 3 helical transmembrane spans lie at 594-614, 622-642, and 665-685; these read FAII…LNVM, AIMS…PLAL, and VGGL…LVAL.

This sequence belongs to the cation transport ATPase (P-type) (TC 3.A.3) family. Type IA subfamily. As to quaternary structure, the system is composed of three essential subunits: KdpA, KdpB and KdpC.

Its subcellular location is the cell inner membrane. It carries out the reaction K(+)(out) + ATP + H2O = K(+)(in) + ADP + phosphate + H(+). Part of the high-affinity ATP-driven potassium transport (or Kdp) system, which catalyzes the hydrolysis of ATP coupled with the electrogenic transport of potassium into the cytoplasm. This subunit is responsible for energy coupling to the transport system and for the release of the potassium ions to the cytoplasm. The polypeptide is Potassium-transporting ATPase ATP-binding subunit (Serratia proteamaculans (strain 568)).